Here is a 56-residue protein sequence, read N- to C-terminus: MGHANIWYSHPRRYCQGSRSCRACSNRHGLIRKYGLNICRQCFREYAHDIGFKKLD.

4 residues coordinate Zn(2+): cysteine 21, cysteine 24, cysteine 39, and cysteine 42.

The protein belongs to the universal ribosomal protein uS14 family. As to quaternary structure, component of the 40S small ribosomal subunit. The cofactor is Zn(2+).

It localises to the cytoplasm. The protein localises to the cytosol. Its subcellular location is the rough endoplasmic reticulum. The chain is Small ribosomal subunit protein uS14 (RpS29) from Lonomia obliqua (Moth).